The following is a 383-amino-acid chain: 8-amino-7-oxononanoate synthase (383 aa).

Arg-21 contributes to the substrate binding site. 108-109 (GY) serves as a coordination point for pyridoxal 5'-phosphate. Substrate is bound at residue His-133. Pyridoxal 5'-phosphate is bound by residues Ser-179, His-207, and Thr-233. An N6-(pyridoxal phosphate)lysine modification is found at Lys-236. Residue Thr-350 coordinates substrate.

It belongs to the class-II pyridoxal-phosphate-dependent aminotransferase family. BioF subfamily. As to quaternary structure, homodimer. Requires pyridoxal 5'-phosphate as cofactor.

The enzyme catalyses 6-carboxyhexanoyl-[ACP] + L-alanine + H(+) = (8S)-8-amino-7-oxononanoate + holo-[ACP] + CO2. The protein operates within cofactor biosynthesis; biotin biosynthesis. In terms of biological role, catalyzes the decarboxylative condensation of pimeloyl-[acyl-carrier protein] and L-alanine to produce 8-amino-7-oxononanoate (AON), [acyl-carrier protein], and carbon dioxide. This chain is 8-amino-7-oxononanoate synthase, found in Yersinia pseudotuberculosis serotype IB (strain PB1/+).